The following is a 245-amino-acid chain: Short-chain dehydrogenase/reductase pyiH (245 aa).

Residues Ile-18, Arg-42, Asp-68, and Asn-95 each coordinate NADP(+). Residue Ser-150 is the Proton donor of the active site.

It belongs to the short-chain dehydrogenases/reductases (SDR) family.

It participates in mycotoxin biosynthesis. In terms of biological role, short-chain dehydrogenase/reductase; part of the gene cluster that mediates the biosynthesis of the mycotoxin pyrichalasin H, a tyrosine-derived cytochalasan that inhibits the growth of rice seedlings, but also inhibits lymphocyte capping and actin polymerization and alters cell morphology. Pyrichalasin H is indicated as the responsible agent for the genus-specific pathogenicity of M.grisea toward crabgrass. The first step in the pathway is catalyzed by the O-methyltransferase pyiA which methylates free tyrosine to generate the precursor O-methyltyrosine. The hybrid PKS-NRPS pyiS, assisted by the enoyl reductase pyiC, are responsible for fusion of the O-methyltyrosine precursor and the polyketide backbone. The polyketide synthase module (PKS) of pyiS is responsible for the synthesis of the polyketide backbone and the downstream nonribosomal peptide synthetase (NRPS) amidates the carboxyl end of the polyketide with the O-methyltyrosine precursor. As the NRPS A-domain demonstrates substrate tolerance, pyiS can also use phenylalanine, tyrosine and even para-chlorophenylalanine as amino acid precursor, which leads to the production of novel cytochalasans, including halogenated cytochalasans. Because pyiS lacks a designated enoylreductase (ER) domain, the required activity is provided the enoyl reductase pyiC. Reduction by the hydrolyase pyiE leads to 1,5-dihydropyrrolone, which is substrate for dehydration and intra-molecular Diels-Alder cyclization by the Diels-Alderase pyiF to yield the required isoindolone-fused macrocycle. The tailoring cytochrome P450 monooxygenases piyD and piyG catalyze the hydroxylation at C-18 and C-7, respectivily, whereas the short-chain dehydrogenase/reductase pyiH reduces the carbonyl at C-21 in preparation for the transfer of an acetyl group by the acetyltransferase pyiB. These 3 reactions whose order is not clear yet, lead to the production of O-methylpyrichalasin J, a deacetylated pyrichalasin H. Finally, pyiB to converts O-methylpyrichalasin J into the final product pyrichalasin H via acetylation of C-21. The chain is Short-chain dehydrogenase/reductase pyiH from Pyricularia grisea (Crabgrass-specific blast fungus).